We begin with the raw amino-acid sequence, 228 residues long: Potassium/proton antiporter CemA (228 aa).

3 consecutive transmembrane segments (helical) span residues 6 to 26 (FIPL…SFSF), 113 to 133 (IICF…LFIL), and 188 to 208 (IISG…KYWI).

This sequence belongs to the CemA family.

Its subcellular location is the plastid. It is found in the chloroplast inner membrane. The enzyme catalyses K(+)(in) + H(+)(out) = K(+)(out) + H(+)(in). In terms of biological role, contributes to K(+)/H(+) antiport activity by supporting proton efflux to control proton extrusion and homeostasis in chloroplasts in a light-dependent manner to modulate photosynthesis. Prevents excessive induction of non-photochemical quenching (NPQ) under continuous-light conditions. Indirectly promotes efficient inorganic carbon uptake into chloroplasts. The protein is Potassium/proton antiporter CemA of Populus alba (White poplar).